We begin with the raw amino-acid sequence, 70 residues long: NAD(P)H-quinone oxidoreductase subunit L (70 aa).

Helical transmembrane passes span 2 to 22 and 39 to 59; these read IVAL…PIAV and LLMY…SPFA.

This sequence belongs to the complex I NdhL subunit family. NDH-1 can be composed of about 15 different subunits; different subcomplexes with different compositions have been identified which probably have different functions.

It is found in the cellular thylakoid membrane. The enzyme catalyses a plastoquinone + NADH + (n+1) H(+)(in) = a plastoquinol + NAD(+) + n H(+)(out). The catalysed reaction is a plastoquinone + NADPH + (n+1) H(+)(in) = a plastoquinol + NADP(+) + n H(+)(out). In terms of biological role, NDH-1 shuttles electrons from an unknown electron donor, via FMN and iron-sulfur (Fe-S) centers, to quinones in the respiratory and/or the photosynthetic chain. The immediate electron acceptor for the enzyme in this species is believed to be plastoquinone. Couples the redox reaction to proton translocation, and thus conserves the redox energy in a proton gradient. Cyanobacterial NDH-1 also plays a role in inorganic carbon-concentration. The protein is NAD(P)H-quinone oxidoreductase subunit L of Nostoc punctiforme (strain ATCC 29133 / PCC 73102).